Reading from the N-terminus, the 93-residue chain is Long neurotoxin 1 (93 aa).

The N-terminal stretch at 1–21 is a signal peptide; that stretch reads MKTLLLTLVVVTIVCLDLGNS. Intrachain disulfides connect C24–C42, C35–C63, C48–C52, C67–C78, and C79–C84.

It belongs to the three-finger toxin family. Long-chain subfamily. Type II alpha-neurotoxin sub-subfamily. As to expression, expressed by the venom gland.

It localises to the secreted. Its function is as follows. Binds with high affinity to muscular (alpha-1/CHRNA1) and neuronal (alpha-7/CHRNA7) nicotinic acetylcholine receptor (nAChR) and inhibits acetylcholine from binding to the receptor, thereby impairing neuromuscular and neuronal transmission. The chain is Long neurotoxin 1 from Tropidechis carinatus (Australian rough-scaled snake).